A 984-amino-acid chain; its full sequence is MKQVVDNQTQNKELVKNGDFNQTNPVSGSWSHTSAREWSAWIDKENTADKSPIIQRTEQGQVSLSSDKGFRGAVTQKVNIDPTKKYEVKFDIETSNKAGQAFLRIMEKKDNNTRLWLSEMTSGTTNKHTLTKIYNPKLNVSEVTLELYYEKGTGSATFDNISMKAKGPKDSEHPQPVTTQIEESVNTALNKNYVFNKADYQYTLTNPSLGKIVGGILYPNATGSTTVKISDKSGKIIKEVPLSVTASTEDKFTKLLDKWNDVTIGNHVYDTNDSNMQKINQKLDETNAKNIKTIKLDSNHTFLWKDLDNLNNSAQLTATYRRLEDLAKQITNPHSTIYKNEKAIRTVKESLAWLHQNFYNVNKDIEGSANWWDFEIGVPRSITATLALMNNYFTDAEIKTYTDPIEHFVPDAGYFRKTLDNPFKALGGNLVDMGRVKIIEGLLRKDNTIIEKTSHSLKNLFTTATKAEGFYADGSYIDHTNVAYTGAYGNVLIDGLTQLLPIIQETDYKISNQELDMVYKWINQSFLPLIVKGELMDMSRGRSISREAASSHAAAVEVLRGFLRLANMSNEERNLDLKSTIKTIITSNKFYNVFNNLKSYSDIANMNKMLNDSTVATKPLKSNLSTFNSMDRLAYYNAEKDFGFALSLHSKRTLNYEGMNDENTRDWYTGDGMFYLYNSDQSHYSNHFWPTVNPYKMAGTTEKDAKREDTTKEFMSKHSKDAKEKTGQVTGTSDFVGSVKLNDHFALAAMDFTNWDRTLTAQKGWVILNDKIVFLGSNIKNTNGIGNVSTTIDQRKDDSKTPYTTYVNGKTIDLKQASSQQFTDTKSVFLESKEPGRNIGYIFFKNSTIDIERKEQTGTWNSINRTSKNTSIVSNPFITISQKHDNKGDSYGYMMVPNIDRTSFDKLANSKEVELLENSSKQQVIYDKNSQTWAVIKHDNQESLINNQFKMNKAGLYLVQKVGNDYQNVYYQPQTMTKTDQLAI.

Composition is skewed to polar residues over residues 1–12, 19–32, and 54–66; these read MKQVVDNQTQNK, DFNQTNPVSGSWSH, and IQRTEQGQVSLSS. Disordered regions lie at residues 1-32 and 49-68; these read MKQVVDNQTQNKELVKNGDFNQTNPVSGSWSH and DKSPIIQRTEQGQVSLSSDK. The first 40 residues, 1 to 40, serve as a signal peptide directing secretion; the sequence is MKQVVDNQTQNKELVKNGDFNQTNPVSGSWSHTSAREWSA. Catalysis depends on residues asparagine 429, histidine 479, and tyrosine 488. Residues 701-726 are compositionally biased toward basic and acidic residues; it reads TEKDAKREDTTKEFMSKHSKDAKEKT. Residues 701 to 728 are disordered; sequence TEKDAKREDTTKEFMSKHSKDAKEKTGQ.

It belongs to the polysaccharide lyase 8 family.

It is found in the secreted. The catalysed reaction is [hyaluronan](n) = n 3-(4-deoxy-beta-D-gluc-4-enuronosyl)-N-acetyl-D-glucosamine + H2O. The chain is Hyaluronate lyase from Streptococcus agalactiae serotype III (strain NEM316).